Reading from the N-terminus, the 442-residue chain is Mirror-image polydactyly gene 1 protein (442 aa).

Residues 1-39 are disordered; it reads MENWSKDITHSYLEQETTGINKSTQPDEQLTMNSEKSMH. Residues 12–35 are compositionally biased toward polar residues; that stretch reads YLEQETTGINKSTQPDEQLTMNSE. 2 coiled-coil regions span residues 107–212 and 253–435; these read SDKE…LENI and ECKM…KVGT.

Expressed very weakly in heart, liver, skeletal muscle, kidney, pancreas and fetal kidney. Not detected in brain, placenta and lung.

The chain is Mirror-image polydactyly gene 1 protein (MIPOL1) from Homo sapiens (Human).